The following is a 214-amino-acid chain: MNKISEISIQSQKTENLVKFNANDDLPKSLFEQKEPHFQAIFDSILSERASKRLSTHKVKNRAEVSGTGKKPWKQKSTGKARAGSKRSPIFVGGGRAFGPTTQRNYNLKVNKKVKKLAFISALSQLAQNQQILVNDFSMNKISTKLLVDQLKIFKIDQLRHILIASSDPNLFLSARNLPNVELVKTNSLTVESLIKADLLIISKNEITNLEKRI.

The segment at 56–86 (THKVKNRAEVSGTGKKPWKQKSTGKARAGSK) is disordered. Basic residues predominate over residues 71-85 (KPWKQKSTGKARAGS).

This sequence belongs to the universal ribosomal protein uL4 family. In terms of assembly, part of the 50S ribosomal subunit.

Functionally, one of the primary rRNA binding proteins, this protein initially binds near the 5'-end of the 23S rRNA. It is important during the early stages of 50S assembly. It makes multiple contacts with different domains of the 23S rRNA in the assembled 50S subunit and ribosome. Forms part of the polypeptide exit tunnel. The sequence is that of Large ribosomal subunit protein uL4 from Mesomycoplasma hyopneumoniae (strain 232) (Mycoplasma hyopneumoniae).